The following is a 126-amino-acid chain: 13 kDa ribonucleoprotein-associated protein (126 aa).

The protein belongs to the eukaryotic ribosomal protein eL8 family. In terms of assembly, binds to the C'/D and B/C motifs in U3 snoRNA. Component of the U4/U6-U5 tri-snRNP complex composed of the U4, U6 and U5 snRNAs and at least PRP3, PRP4, PRP6, PRP8, PRP18, PRP31, PRP38, SNU13, SNU23, SNU66, SNU114, SPP381, SMB1, SMD1, SMD2, SMD3, SMX2, SMX3, LSM2, LSM3, LSM4, LSM5, LSM6, LSM7, LSM8, BRR2 and DIB1. Binds to the 5'-stem-loop of U4 snRNA. Component of the ribosomal small subunit (SSU) processome composed of at least 40 protein subunits and snoRNA U3.

The protein localises to the nucleus. The protein resides in the nucleolus. Common component of the spliceosome and rRNA processing machinery. In association with the spliceosomal U4/U6.U5 tri-snRNP particle, required for splicing of pre-mRNA. In association with box C/D snoRNPs, required for processing of pre-ribosomal RNA (rRNA) and site-specific 2'-O-methylation of substrate RNAs. Essential for the accumulation and stability of U4 snRNA, U6 snRNA, and box C/D snoRNAs. The chain is 13 kDa ribonucleoprotein-associated protein (SNU13) from Saccharomyces cerevisiae (strain ATCC 204508 / S288c) (Baker's yeast).